Reading from the N-terminus, the 358-residue chain is Transcription factor bHLH67 (358 aa).

Residues 125 to 176 (NMTLPSSTSSPLSAHSRRKRKINHLLPQEMTREKRKRRKTKPSKNNEEIENQ) are disordered. Low complexity predominate over residues 127 to 137 (TLPSSTSSPLS). Over residues 157–166 (EKRKRRKTKP) the composition is skewed to basic residues. Residues 175 to 226 (NQRINHIAVERNRRRQMNEHINSLRALLPPSYIQRGDQASIVGGAINYVKVL) form the bHLH domain.

Homodimer. As to expression, expressed constitutively in roots, leaves, stems, and flowers.

The protein localises to the nucleus. The chain is Transcription factor bHLH67 (BHLH67) from Arabidopsis thaliana (Mouse-ear cress).